The following is a 610-amino-acid chain: UvrABC system protein C (610 aa).

Residues 13-91 (HLPGVYRMYD…IKENQPKYNV (79 aa)) enclose the GIY-YIG domain. A UVR domain is found at 201–236 (GQVVEHLVQKMENAAQELDFEAAARFRDQIQSVRAV).

The protein belongs to the UvrC family. In terms of assembly, interacts with UvrB in an incision complex.

The protein resides in the cytoplasm. Its function is as follows. The UvrABC repair system catalyzes the recognition and processing of DNA lesions. UvrC both incises the 5' and 3' sides of the lesion. The N-terminal half is responsible for the 3' incision and the C-terminal half is responsible for the 5' incision. This chain is UvrABC system protein C, found in Actinobacillus pleuropneumoniae serotype 7 (strain AP76).